We begin with the raw amino-acid sequence, 116 residues long: Large ribosomal subunit protein uL22 (116 aa).

Belongs to the universal ribosomal protein uL22 family. In terms of assembly, part of the 50S ribosomal subunit.

Functionally, this protein binds specifically to 23S rRNA; its binding is stimulated by other ribosomal proteins, e.g. L4, L17, and L20. It is important during the early stages of 50S assembly. It makes multiple contacts with different domains of the 23S rRNA in the assembled 50S subunit and ribosome. Its function is as follows. The globular domain of the protein is located near the polypeptide exit tunnel on the outside of the subunit, while an extended beta-hairpin is found that lines the wall of the exit tunnel in the center of the 70S ribosome. The polypeptide is Large ribosomal subunit protein uL22 (Sulfurihydrogenibium sp. (strain YO3AOP1)).